The chain runs to 261 residues: Adenosylcobinamide-GDP ribazoletransferase (261 aa).

7 helical membrane passes run 9-29 (LELFLLAVSFFSRIPVPVSLP), 41-61 (YFALVGLLLGAICALVYSLAT), 64-84 (FSTNISVFLTMVLSLLLTGAF), 114-134 (IGTYGSSALIMVLLGKYLLLT), 141-161 (SLVPVWLLAYTLSRAVAASLI), 196-216 (ATLLYFSWQFIGVMIAASLIF), and 235-255 (CLGAAQQLMEILIYLILLAFL).

Belongs to the CobS family. Mg(2+) serves as cofactor.

The protein resides in the cell inner membrane. It carries out the reaction alpha-ribazole + adenosylcob(III)inamide-GDP = adenosylcob(III)alamin + GMP + H(+). The catalysed reaction is alpha-ribazole 5'-phosphate + adenosylcob(III)inamide-GDP = adenosylcob(III)alamin 5'-phosphate + GMP + H(+). It functions in the pathway cofactor biosynthesis; adenosylcobalamin biosynthesis; adenosylcobalamin from cob(II)yrinate a,c-diamide: step 7/7. Joins adenosylcobinamide-GDP and alpha-ribazole to generate adenosylcobalamin (Ado-cobalamin). Also synthesizes adenosylcobalamin 5'-phosphate from adenosylcobinamide-GDP and alpha-ribazole 5'-phosphate. This Vibrio cholerae serotype O1 (strain ATCC 39541 / Classical Ogawa 395 / O395) protein is Adenosylcobinamide-GDP ribazoletransferase.